The following is a 183-amino-acid chain: Shikimate kinase (183 aa).

Residue 19-24 participates in ATP binding; that stretch reads GAGKTT. Mg(2+) is bound at residue T23. Substrate-binding residues include D41, R65, and G87. Residue R124 coordinates ATP. Residue R143 coordinates substrate.

The protein belongs to the shikimate kinase family. In terms of assembly, monomer. Requires Mg(2+) as cofactor.

The protein resides in the cytoplasm. The catalysed reaction is shikimate + ATP = 3-phosphoshikimate + ADP + H(+). Its pathway is metabolic intermediate biosynthesis; chorismate biosynthesis; chorismate from D-erythrose 4-phosphate and phosphoenolpyruvate: step 5/7. Functionally, catalyzes the specific phosphorylation of the 3-hydroxyl group of shikimic acid using ATP as a cosubstrate. This is Shikimate kinase from Thermosynechococcus vestitus (strain NIES-2133 / IAM M-273 / BP-1).